Here is a 548-residue protein sequence, read N- to C-terminus: MNEPTVQPSRTSSAPASPASPRGWSDFCEQHAAAAARELARQYWLFARAHPQPPRADLVSLQFAELFQRHFCREVRESLAGPPGHDYRATAPPRPALPKARSSEDLGPRPACALQHLRRGLRQLFRRRSAGELPGATSDTNDIDTTAASRPGPARKLLPWGLREPPTEALKEVVLRYSLADEAAMDSGARWQRGRLVLRSPGPGHSHFLQLFDPPKSSKPKLQEACSSIREVRPCTRLEMPDNLYTFVLKVQDQTDIIFEVGDEQQLNSWLAELRASTGLGLEHPDTELPLSLAAEPGPARSPRGSTDSLDQGASPGVLLDPACQKTDHFLSCYPWFHGPISRVRAAQLVQLQGPDAHGVFLVRQSESRRGEYVLTFNLQGRAKHLRLVLTERGQCRVQHLHFPSVVDMLRHFQRSPIPLECGAACDVRLSGYVVVLSQAPGSSNTVLFPFSLPHWDSELGHPHLSSVGCPPSHGAEALPGQVTPPEQIFHLVPSPEELANSLRQLELESVSSARDSDYDMDSSSRGHLRAIDNQYTPLSQLCREADV.

A compositionally biased stretch (polar residues) spans 1–11 (MNEPTVQPSRT). 3 disordered regions span residues 1–25 (MNEPTVQPSRTSSAPASPASPRGWS), 78–108 (SLAGPPGHDYRATAPPRPALPKARSSEDLGP), and 128–160 (RSAGELPGATSDTNDIDTTAASRPGPARKLLPW). Residues 12–21 (SSAPASPASP) are compositionally biased toward low complexity. Phosphoserine occurs at positions 13, 102, and 129. Residues 137-148 (TSDTNDIDTTAA) show a composition bias toward polar residues. Residues 168-279 (EALKEVVLRY…WLAELRASTG (112 aa)) enclose the PH domain. The segment at 290–313 (PLSLAAEPGPARSPRGSTDSLDQG) is disordered. Ser302 is subject to Phosphoserine. An SH2 domain is found at 336–434 (WFHGPISRVR…ACDVRLSGYV (99 aa)).

It belongs to the SH2B adapter family. In terms of processing, tyrosine phosphorylated.

Its function is as follows. Links T-cell receptor activation signal to phospholipase C-gamma-1, GRB2 and phosphatidylinositol 3-kinase. This is SH2B adapter protein 3 (Sh2b3) from Mus musculus (Mouse).